Reading from the N-terminus, the 547-residue chain is MDWGTELWDQFEVLERHTQWGLDLLDKYVKFVKERVEVEQSYAKQLRSLVKKYLPKRPAKDDPEIKFSQQQSFVQLLQEVNDFAGQRELVAESLGIRVCLELAKYSQEMKQERKMHFQEGRRAQQQLENGFKQLENSKRKFERDCREAEKAAHTAERLDQDINATKADVEKAKQQAHLRNHMAEESKNEYAAQLQRFNRDQAHFYFSQMPQIFDKLQDMDERRATRLGAGYGLLSEAELQVVPIIGKCLEGMKVAAESVDAKNDSKVLIELHKSGFARPGDLEFEDFSQVMNRVPSDSSLGTPDGRPELRAASSRSRAKRWPFGKKNKTVVTEDFSHLPPEQQRKRLQQQLEERNRELQKEEDQREALKKMKDVYEKTPQMGDPASLEPRIAETLGNIERLKLEVQKYEAWLAEAESRVLSNRGDSLSRHTRPPDPPTTAPPDSSSSSNNSGSQDNKESSEEPPSEEGQDTPIYTEFDEDFEEPASPIGQCVAIYHFEGSSEGTVSMSEGEDLSLMEEDKGDGWTRVRRKQGGEGYVPTSYLRVTLN.

Residues 1–117 are required for translocation to the plasma membrane in response to insulin, podosome formation and interaction with AKAP9 and microtubules; sequence MDWGTELWDQ…EMKQERKMHF (117 aa). One can recognise an F-BAR domain in the interval 1 to 264; it reads MDWGTELWDQ…AAESVDAKND (264 aa). A coiled-coil region spans residues 67–259; the sequence is FSQQQSFVQL…EGMKVAAESV (193 aa). Positions 293 to 483 are interaction with CDC42; sequence RVPSDSSLGT…YTEFDEDFEE (191 aa). Residues 293–547 are interaction with PDE6G; that stretch reads RVPSDSSLGT…PTSYLRVTLN (255 aa). The tract at residues 294–323 is disordered; the sequence is VPSDSSLGTPDGRPELRAASSRSRAKRWPF. 3 positions are modified to phosphoserine: Ser296, Ser298, and Ser299. Residues 332 to 425 adopt a coiled-coil conformation; that stretch reads TEDFSHLPPE…ESRVLSNRGD (94 aa). The REM-1 domain maps to 337-414; that stretch reads HLPPEQQRKR…VQKYEAWLAE (78 aa). The segment at 415 to 547 is required for interaction with FASLG and localization to lysosomes; that stretch reads AESRVLSNRG…PTSYLRVTLN (133 aa). A disordered region spans residues 420–485; it reads LSNRGDSLSR…EFDEDFEEPA (66 aa). Ser426 carries the phosphoserine modification. The interaction with DNM2 and WASL stretch occupies residues 431–487; that stretch reads TRPPDPPTTAPPDSSSSSNNSGSQDNKESSEEPPSEEGQDTPIYTEFDEDFEEPASP. Positions 441-451 are enriched in low complexity; sequence PPDSSSSSNNS. Residues 476-547 are interaction with DNM1 and WASL; that stretch reads EFDEDFEEPA…PTSYLRVTLN (72 aa). A required for podosome formation region spans residues 484 to 547; sequence PASPIGQCVA…PTSYLRVTLN (64 aa). The SH3 domain maps to 486 to 547; that stretch reads SPIGQCVAIY…PTSYLRVTLN (62 aa). The segment at 490-547 is interaction with WAS; it reads QCVAIYHFEGSSEGTVSMSEGEDLSLMEEDKGDGWTRVRRKQGGEGYVPTSYLRVTLN. Positions 492-547 are interaction with ARHGAP17, DAAM1, DIAPH1 and DIAPH2; the sequence is VAIYHFEGSSEGTVSMSEGEDLSLMEEDKGDGWTRVRRKQGGEGYVPTSYLRVTLN.

It belongs to the FNBP1 family. In terms of assembly, homodimerizes, the dimers can polymerize end-to-end to form filamentous structures. Interacts specifically with GTP-bound CDC42 and RHOQ. Interacts with AKAP9, ARHGAP17, DAAM1, DIAPH1, DIAPH2, DNM1, DNM2, FASLG/FASL, GAPVD1, LYN, microtubules, SRC, WAS/WASP and WASL/N-WASP. Interacts with the ligand binding domain of the thyroid receptor (TR) in the presence of thyroid hormone. May interact with CTNNB1 and HD/HTT. Interacts with PDE6G. In terms of tissue distribution, expressed in adrenal gland, aorta, brain, heart, kidney, liver, skeletal muscle and spleen.

It is found in the cytoplasm. The protein localises to the cytoskeleton. The protein resides in the cell cortex. It localises to the lysosome. Its subcellular location is the golgi apparatus. It is found in the cell membrane. The protein localises to the cell projection. The protein resides in the phagocytic cup. Required to coordinate membrane tubulation with reorganization of the actin cytoskeleton during endocytosis. Also acts as a link between CDC42 signaling and regulation of the actin cytoskeleton. Binds to lipids such as phosphatidylinositol 4,5-bisphosphate and phosphatidylserine and promotes membrane invagination and the formation of tubules. Also enhances actin polymerization in the vicinity of membrane tubules by recruiting WASL/N-WASP which in turn activates the Arp2/3 complex. Actin polymerization and dynamin may promote the fission of membrane tubules to form endocytic vesicles. Required for the formation of podosomes, actin-rich adhesion structures specific to monocyte-derived cells. Required for translocation of GLUT4 to the plasma membrane in response to insulin signaling. May be required for the lysosomal retention of FASLG/FASL. The sequence is that of Cdc42-interacting protein 4 (Trip10) from Rattus norvegicus (Rat).